Consider the following 240-residue polypeptide: Uridylate kinase (240 aa).

9-12 (KLSG) provides a ligand contact to ATP. Residue Gly51 coordinates UMP. Residues Gly52 and Arg56 each coordinate ATP. UMP is bound by residues Asp71 and 132–139 (TGNPFFTT). ATP-binding residues include Thr159, Tyr165, and Asp168.

It belongs to the UMP kinase family. Homohexamer.

It localises to the cytoplasm. The enzyme catalyses UMP + ATP = UDP + ADP. The protein operates within pyrimidine metabolism; CTP biosynthesis via de novo pathway; UDP from UMP (UMPK route): step 1/1. Inhibited by UTP. Its function is as follows. Catalyzes the reversible phosphorylation of UMP to UDP. The polypeptide is Uridylate kinase (Synechococcus elongatus (strain ATCC 33912 / PCC 7942 / FACHB-805) (Anacystis nidulans R2)).